The sequence spans 569 residues: MNRLATGTAMHPAMTARTVTRGSVQQAVGGTAAMTQVALTARPITNMGMPGTRAVGGQRQVLDLGYYTSELRNLITATNKEAEALSKQTIELQKREGQLQRQQESLHAIQREVDELQGELQDILYSQSRLSENATLEDLRAEATEAESAASKTRNEANIAYKARVDAEERLRKNEASAVHLRTEMEAQIESTLGLQAAERYRSLNDENITLKQKESELRKELQEAAAVAANAYSFCTILSNYTSGGSISGQPGHIAMDERISGVDTNIQKAITLHRQIRAAKRELDAYKAKIKAAESHDPEQSLKQQLRNRFRVEQMETQSLVEEIKITESGVQQRKKLLEEITPDATVTITKEQKDLLKSVIKAEAFLVEFPNKKLALQTSIKQAQAEVVNLISRLPIPQGTVSVPGEENPGAIEAQLQQKSRELDRTTDTEMRVNAELRTYGDKVSALTDSLERLRADLRDAESIENVEAEESTLKTKLTSLKAMHEEETKTLEKSKGALRLIEDQIAANENAQLLRNLLDQLSANLQKKYAVELFIVQKTIESCYDEPKKKCLQLVSEINNILMGG.

3 coiled-coil regions span residues Ile-75–Glu-156, Tyr-201–Asn-231, and Ala-271–His-298.

It belongs to the IFT74 family.

The protein resides in the cell projection. Its subcellular location is the cilium. The protein localises to the flagellum. It is found in the cytoplasm. It localises to the cytoskeleton. The protein resides in the flagellum axoneme. Its subcellular location is the flagellum basal body. Functionally, component of the intraflagellar transport complex B (IFT-B) involved in flagellar assembly. The sequence is that of Intraflagellar transport protein 74/72 from Giardia intestinalis (strain ATCC 50803 / WB clone C6) (Giardia lamblia).